Consider the following 72-residue polypeptide: MAKEDSIRMQGVIVDTLPNTMFRVELENGHVVTAHISGKMRKHYIRILTGDKVTVELTPYDLNKGRIVYRER.

The S1-like domain occupies 1–72 (MAKEDSIRMQ…NKGRIVYRER (72 aa)).

This sequence belongs to the IF-1 family. As to quaternary structure, component of the 30S ribosomal translation pre-initiation complex which assembles on the 30S ribosome in the order IF-2 and IF-3, IF-1 and N-formylmethionyl-tRNA(fMet); mRNA recruitment can occur at any time during PIC assembly.

Its subcellular location is the cytoplasm. Functionally, one of the essential components for the initiation of protein synthesis. Stabilizes the binding of IF-2 and IF-3 on the 30S subunit to which N-formylmethionyl-tRNA(fMet) subsequently binds. Helps modulate mRNA selection, yielding the 30S pre-initiation complex (PIC). Upon addition of the 50S ribosomal subunit IF-1, IF-2 and IF-3 are released leaving the mature 70S translation initiation complex. The protein is Translation initiation factor IF-1 of Halorhodospira halophila (strain DSM 244 / SL1) (Ectothiorhodospira halophila (strain DSM 244 / SL1)).